The chain runs to 250 residues: LNELSFNFDKFVPNQNNILFQGVASVSTTGVLQVTKVTNTGIKRALYAAPIHAWDDDSETGKVASFATSFSFVVKEPPIQSRKADGVDGLAFFLAPANSQIPSGSSAGMFGLFCSSDYNSSNQIIAVEFDTYFGKAYNPWDPDFKHIGVDVNSIKSIKTVKWDWRNGDVANVVITYRAPTKSLTVSLSYPSDQTSNIVTASVDLKAILPEWVSVGFSAGVGNAAKFNHDILSWYFTSNLEPNNPAVNQAQ.

A glycan (N-linked (GlcNAc...) asparagine; partial) is linked at Asn-119. Mn(2+) contacts are provided by Glu-128 and Asp-130. Positions 130, 132, 138, and 141 each coordinate Ca(2+). Residues Asp-141 and His-146 each contribute to the Mn(2+) site.

The protein belongs to the leguminous lectin family.

Functionally, di-N-acetylchitobiose specific lectin. The polypeptide is Lectin 1 (Laburnum alpinum (Scotch laburnum)).